The following is a 569-amino-acid chain: 2-succinyl-5-enolpyruvyl-6-hydroxy-3-cyclohexene-1-carboxylate synthase (569 aa).

Belongs to the TPP enzyme family. MenD subfamily. Homodimer. The cofactor is Mg(2+). Requires Mn(2+) as cofactor. Thiamine diphosphate serves as cofactor.

The catalysed reaction is isochorismate + 2-oxoglutarate + H(+) = 5-enolpyruvoyl-6-hydroxy-2-succinyl-cyclohex-3-ene-1-carboxylate + CO2. The protein operates within quinol/quinone metabolism; 1,4-dihydroxy-2-naphthoate biosynthesis; 1,4-dihydroxy-2-naphthoate from chorismate: step 2/7. It participates in quinol/quinone metabolism; menaquinone biosynthesis. Functionally, catalyzes the thiamine diphosphate-dependent decarboxylation of 2-oxoglutarate and the subsequent addition of the resulting succinic semialdehyde-thiamine pyrophosphate anion to isochorismate to yield 2-succinyl-5-enolpyruvyl-6-hydroxy-3-cyclohexene-1-carboxylate (SEPHCHC). The chain is 2-succinyl-5-enolpyruvyl-6-hydroxy-3-cyclohexene-1-carboxylate synthase from Haemophilus ducreyi (strain 35000HP / ATCC 700724).